The following is a 482-amino-acid chain: Putative transposase R186 (482 aa).

Zn(2+)-binding residues include Cys416, Cys419, Cys433, and Cys435.

In the central section; belongs to the transposase 2 family. This sequence in the C-terminal section; belongs to the transposase 35 family.

This Acanthamoeba polyphaga (Amoeba) protein is Putative transposase R186.